The sequence spans 195 residues: COMM domain-containing protein 3 (195 aa).

The 70-residue stretch at 124–193 folds into the COMM domain; that stretch reads HITDVSWRLE…DASKSLERAT (70 aa).

This sequence belongs to the COMM domain-containing protein 3 family. As to quaternary structure, component of the commander complex consisting of the CCC subcomplex and the retriever subcomplex. Component of the CCC (COMMD/CCDC22/CCDC93) subcomplex consisting of COMMD1, COMMD2, COMMD3, COMMD4, COMMD5, COMMD6, COMMD7, COMMD8, COMMD9, COMMD10, CCDC22 and CCDC93; within the complex forms a heterodimer with COMMD2. Interacts with NFKB1/p105. Interacts with CCDC22, CCDC93, SCNN1B, CUL3, CUL4A, CUL4B, CUL5. In terms of tissue distribution, widely expressed with highest expression in thymus.

The protein localises to the cytoplasm. It is found in the nucleus. Functionally, scaffold protein in the commander complex that is essential for endosomal recycling of transmembrane cargos; the commander complex is composed of the CCC subcomplex and the retriever subcomplex. May modulate activity of cullin-RING E3 ubiquitin ligase (CRL) complexes. May down-regulate activation of NF-kappa-B. Modulates Na(+) transport in epithelial cells by regulation of apical cell surface expression of amiloride-sensitive sodium channel (ENaC) subunits. This Homo sapiens (Human) protein is COMM domain-containing protein 3 (COMMD3).